Consider the following 161-residue polypeptide: Phosphopantetheine adenylyltransferase (161 aa).

Residue Ser8 coordinates substrate. ATP-binding positions include 8 to 9 (SF) and His16. The substrate site is built by Lys40, Thr72, and Arg86. ATP contacts are provided by residues 87-89 (GLR), Glu97, and 122-128 (HSFLSSS).

It belongs to the bacterial CoaD family. In terms of assembly, homohexamer. The cofactor is Mg(2+).

Its subcellular location is the cytoplasm. The enzyme catalyses (R)-4'-phosphopantetheine + ATP + H(+) = 3'-dephospho-CoA + diphosphate. It participates in cofactor biosynthesis; coenzyme A biosynthesis; CoA from (R)-pantothenate: step 4/5. Functionally, reversibly transfers an adenylyl group from ATP to 4'-phosphopantetheine, yielding dephospho-CoA (dPCoA) and pyrophosphate. This chain is Phosphopantetheine adenylyltransferase, found in Prochlorococcus marinus (strain SARG / CCMP1375 / SS120).